Reading from the N-terminus, the 315-residue chain is Homoserine kinase (315 aa).

An ATP-binding site is contributed by 97 to 107 (PPARGLGSSAT).

Belongs to the GHMP kinase family. Homoserine kinase subfamily.

Its subcellular location is the cytoplasm. The catalysed reaction is L-homoserine + ATP = O-phospho-L-homoserine + ADP + H(+). The protein operates within amino-acid biosynthesis; L-threonine biosynthesis; L-threonine from L-aspartate: step 4/5. Its function is as follows. Catalyzes the ATP-dependent phosphorylation of L-homoserine to L-homoserine phosphate. The chain is Homoserine kinase from Prochlorococcus marinus (strain SARG / CCMP1375 / SS120).